The chain runs to 90 residues: Putative Fis-like DNA-binding protein (90 aa).

The segment at residues 66-85 (QSRAAALLGIHRATLRKKLK) is a DNA-binding region (H-T-H motif).

The protein belongs to the transcriptional regulatory Fis family.

This is Putative Fis-like DNA-binding protein from Xylella fastidiosa (strain Temecula1 / ATCC 700964).